Reading from the N-terminus, the 529-residue chain is Peptide chain release factor 3 (529 aa).

Residues 11-280 (ATRRTFAIIS…GLVQWAPPPQ (270 aa)) form the tr-type G domain. GTP contacts are provided by residues 20 to 27 (SHPDAGKT), 88 to 92 (DTPGH), and 142 to 145 (NKLD).

It belongs to the TRAFAC class translation factor GTPase superfamily. Classic translation factor GTPase family. PrfC subfamily.

The protein localises to the cytoplasm. In terms of biological role, increases the formation of ribosomal termination complexes and stimulates activities of RF-1 and RF-2. It binds guanine nucleotides and has strong preference for UGA stop codons. It may interact directly with the ribosome. The stimulation of RF-1 and RF-2 is significantly reduced by GTP and GDP, but not by GMP. The protein is Peptide chain release factor 3 of Alcanivorax borkumensis (strain ATCC 700651 / DSM 11573 / NCIMB 13689 / SK2).